A 471-amino-acid chain; its full sequence is Putative multidrug resistance protein MdtD (471 aa).

The next 13 helical transmembrane spans lie at 12 to 32, 49 to 69, 77 to 97, 106 to 126, 138 to 158, 165 to 185, 195 to 215, 220 to 240, 263 to 283, 286 to 306, 342 to 362, 393 to 413, and 431 to 451; these read LWIV…VNTA, MIIV…GWLA, IFFT…QAST, VLQG…VMKI, FVTL…GVLV, WIFL…LCLM, FDLS…LALD, LGIS…ALLL, FSLG…LPFM, VFLQ…MIPM, LLFM…VLFL, LLSM…GLLL, and VFLY…LIFS.

The protein belongs to the major facilitator superfamily. TCR/Tet family.

It localises to the cell inner membrane. The sequence is that of Putative multidrug resistance protein MdtD from Klebsiella pneumoniae (strain 342).